The following is an 887-amino-acid chain: DNA mismatch repair protein MutS (887 aa).

ATP is bound at residue 602 to 609 (GPNMSGKS).

The protein belongs to the DNA mismatch repair MutS family.

Functionally, this protein is involved in the repair of mismatches in DNA. It is possible that it carries out the mismatch recognition step. This protein has a weak ATPase activity. This chain is DNA mismatch repair protein MutS, found in Staphylococcus saprophyticus subsp. saprophyticus (strain ATCC 15305 / DSM 20229 / NCIMB 8711 / NCTC 7292 / S-41).